A 297-amino-acid chain; its full sequence is uncharacterized protein (297 aa).

9 consecutive transmembrane segments (helical) span residues 1–21 (MSWI…LGII), 32–52 (GSIL…IYVY), 72–92 (AMAL…NIPS), 98–118 (VLFF…YGGI), 120–140 (LIHK…ATGI), 194–214 (ILIE…IFAI), 218–238 (VYII…LFFC), 253–273 (LALI…IEIP), and 274–294 (AYIS…ASIL).

Belongs to the TerC family.

Its subcellular location is the cell membrane. This is an uncharacterized protein from Rickettsia prowazekii (strain Madrid E).